The following is a 356-amino-acid chain: Tyrosine recombinase XerS (356 aa).

A Core-binding (CB) domain is found at 16–121; it reads IMPWYVLDYY…ALSSLYKYLT (106 aa). In terms of domain architecture, Tyr recombinase spans 169–354; sequence AFLDYVDKEY…VNDEQKNALD (186 aa). Active-site residues include Arg-210, Lys-234, His-306, Arg-309, and His-332. Tyr-341 functions as the O-(3'-phospho-DNA)-tyrosine intermediate in the catalytic mechanism.

The protein belongs to the 'phage' integrase family. XerS subfamily.

Its subcellular location is the cytoplasm. With respect to regulation, ftsK is required for recombination. Its function is as follows. Site-specific tyrosine recombinase, which acts by catalyzing the cutting and rejoining of the recombining DNA molecules. Essential to convert dimers of the bacterial chromosome into monomers to permit their segregation at cell division. In Streptococcus equi subsp. zooepidemicus (strain H70), this protein is Tyrosine recombinase XerS.